We begin with the raw amino-acid sequence, 122 residues long: Large ribosomal subunit protein uL14 (122 aa).

The protein belongs to the universal ribosomal protein uL14 family. In terms of assembly, part of the 50S ribosomal subunit. Forms a cluster with proteins L3 and L19. In the 70S ribosome, L14 and L19 interact and together make contacts with the 16S rRNA in bridges B5 and B8.

Binds to 23S rRNA. Forms part of two intersubunit bridges in the 70S ribosome. This is Large ribosomal subunit protein uL14 from Clostridium botulinum (strain 657 / Type Ba4).